Consider the following 570-residue polypeptide: Methyl-coenzyme M reductase subunit alpha (570 aa).

Gln161 contacts coenzyme F430. Residues Arg239, 270 to 271, and Arg284 contribute to the coenzyme B site; that span reads KH. His271 bears the Pros-methylhistidine mark. Arg285 bears the 5-methylarginine mark. Residues Tyr346 and Phe464 each coordinate coenzyme M. Gly465 carries the post-translational modification 1-thioglycine. At Asp470 the chain carries (Z)-2,3-didehydroaspartate. Position 472 is an S-methylcysteine (Cys472).

Belongs to the methyl-coenzyme M reductase alpha subunit family. In terms of assembly, MCR is a hexamer of two alpha, two beta, and two gamma chains, forming a dimer of heterotrimers. Requires coenzyme F430 as cofactor. In terms of processing, the alpha subunit contains five modified amino acids near the active site region. Is methylated on His-271, Arg-285 and Cys-472, probably by the action of specific S-adenosylmethionine-dependent methyltransferases. Also contains a thioglycine at position 465, forming a thiopeptide bond. Contains a didehydroaspartate residue at position 470. The methylation on C5 of Arg-285 is a post-translational methylation not essential in vivo, but which plays a role for the stability and structural integrity of MCR. Does not show a methylation at Gln-420, as shown for M.marburgensis.

It localises to the cytoplasm. The catalysed reaction is coenzyme B + methyl-coenzyme M = methane + coenzyme M-coenzyme B heterodisulfide. It participates in one-carbon metabolism; methyl-coenzyme M reduction; methane from methyl-coenzyme M: step 1/1. Functionally, component of the methyl-coenzyme M reductase (MCR) I that catalyzes the reductive cleavage of methyl-coenzyme M (CoM-S-CH3 or 2-(methylthio)ethanesulfonate) using coenzyme B (CoB or 7-mercaptoheptanoylthreonine phosphate) as reductant which results in the production of methane and the mixed heterodisulfide of CoB and CoM (CoM-S-S-CoB). This is the final step in methanogenesis. This is Methyl-coenzyme M reductase subunit alpha (mcrA) from Methanosarcina barkeri (strain Fusaro / DSM 804).